Reading from the N-terminus, the 316-residue chain is Pantothenate kinase (316 aa).

95–102 is a binding site for ATP; sequence GSVAVGKS.

The protein belongs to the prokaryotic pantothenate kinase family.

It is found in the cytoplasm. The enzyme catalyses (R)-pantothenate + ATP = (R)-4'-phosphopantothenate + ADP + H(+). It functions in the pathway cofactor biosynthesis; coenzyme A biosynthesis; CoA from (R)-pantothenate: step 1/5. This is Pantothenate kinase from Yersinia enterocolitica serotype O:8 / biotype 1B (strain NCTC 13174 / 8081).